The primary structure comprises 263 residues: tRNA uridine(34) hydroxylase (263 aa).

The Rhodanese domain maps to Glu129–Tyr223. Cys183 (cysteine persulfide intermediate) is an active-site residue.

This sequence belongs to the TrhO family.

It carries out the reaction uridine(34) in tRNA + AH2 + O2 = 5-hydroxyuridine(34) in tRNA + A + H2O. Functionally, catalyzes oxygen-dependent 5-hydroxyuridine (ho5U) modification at position 34 in tRNAs. In Delftia acidovorans (strain DSM 14801 / SPH-1), this protein is tRNA uridine(34) hydroxylase.